Reading from the N-terminus, the 1493-residue chain is MSYPGKDKNIPGRIIEALEDLPLSYLVPKDGLAALVNAPMRVSLPFDKTIFTSADDGRDVNINVLGTANSTTSSIKNEAEKERLVFKRPSNFTSSANSVDYVPTNFLEGLSPLAQSVLSTHKGLNDSINIEKKSEIVSRPEAKHKLESVTSNAGNLSFNDNSSNKKTKTSTGVTMTQANLAEQYLNDLKNILDIVGFDQNSAEIGNIEYWLQLPNKKFVLTTNCLTKLQMTIKNITDNPQLSNSIEITWLLRLLDVMVCNIKFSKSSLKMGLDDSMLRYIALLSTIVLFNIFLLGKNDSNLHRESYIMEPVNFLSDLIESLKILTIEYGSLKIEFDTFQEALELLPKYIRNGPFLDDNVTAKLVYIFSDLLMNNDIEATTNIQFQSFWDNVKRISSDILVSLFGSFDQQRGFIIEELLSHIEKLPTKRIQKKLRKVGNQNIYITDFTFTLMSMLENINCYSFCNQMKDIAPENIDLLKNEYKKQEEFLFNIVEHINDTILERFFKNPSALRYVIDNFVQDLLLLISSPQWPVTEKILSSLLKRLLSVYSPSMQVSANIETICLQLIGNIGSTIFDIKCSTRDHEDNNLIKMINYPETLPHFFKSFEECIAYNETIKCRRSATRFLWNLRLGTILILEEYTKDAKEQIITVDNELKKILEQIKDGGLGPELENREADFSTIKLDYFSILHAFELLNLYDPYLKLILSLLAKDKIKLRSTAIKCLSMLASKDKVILSNPMVKETIHRRLNDSSASVKDAILDLVSINSSYFEFYQQINNNYNDDSIMVRKHVLRINEKMYDETNDIVTKVYVIARILMKIEDEEDNIIDMARLILLNRWILKVHEVLDQPEKLKEISSSVLLVMSRVAIMNEKCSQLFDLFLNFYLLNKEAHSKEAYDKITHVLTILTDFLVQKIVELNSDDTNEKNSIVDKQNFLNLLAKFADSTVSFLTKDHITALYPYMVSDEKSDFHYYILQVFRCTFEKLANFKQKFLYDLETTLLSRLPKMNVREIDEAMPLIWSVATHRHDTARVAKACSSCLSHLHPYINKANNEEAAIVVDGKLQRLIYLSTGFARFCFPKPSNDKIAFLQEGETLYEHITKCLLVLSKDKITHVIRRVAVKNLTKLCGNHPKLFNSRHVLHLLDKEFQSDQLDIKLVILESLYDLFLLEERKSVRNTGVNSTLSSNSILKKKLLKTNRVEFANDGVCSALATRFLDNILQLCLLRDLKNSLVAIRLLKLILKFGYTNPSHSIPTVIALFASTSQYIRHVAYELLEDLFEKYETLVFSSLSRGVTKAIHYSIHTDEKYYYKHDHFLSLLEKLCGTGKKNGPKFFKVLKRIMQSYLDDITDLTSTNSSVQKSIFVLCTNISNITFVSQYDLVSLLKTIDLTTDRLKEVIMDEIGDNVSSLSVSEEKLSGIILIQLSLQDLGTYLLHLYGLRDDVLLLDIVEESELKNKQLPAKKPDISKFSAQLENIEQYSSNGKLLTYFRKHVKDT.

Position 43 is a phosphoserine; in mutant scc2-8A (Ser43). The residue at position 67 (Thr67) is a Phosphothreonine. Phosphoserine; in mutant scc2-8A is present on Ser74. A phosphoserine mark is found at Ser127 and Ser157. The tract at residues 151–170 is disordered; sequence SNAGNLSFNDNSSNKKTKTS. Ser162 carries the phosphoserine; in mutant scc2-8A modification. Ser163 carries the phosphoserine modification. Phosphothreonine occurs at positions 231 and 236. Phosphoserine occurs at positions 305 and 320. Thr360 is subject to Phosphothreonine; in mutant scc2-8A. 4 HEAT repeats span residues 695–732, 734–771, 806–843, and 1132–1169; these read NLYDPYLKLILSLLAKDKIKLRSTAIKCLSMLASKDKV, LSNPMVKETIHRRLNDSSASVKDAILDLVSINSSYFEF, TKVYVIARILMKIEDEEDNIIDMARLILLNRWILKVHE, and FNSRHVLHLLDKEFQSDQLDIKLVILESLYDLFLLEER. A Phosphoserine modification is found at Ser753. Phosphoserine; in mutant scc2-8A is present on Ser1179. Residue Ser1182 is modified to Phosphoserine. Ser1183 is subject to Phosphoserine; in mutant scc2-8A. A Phosphoserine modification is found at Ser1185. One copy of the HEAT 5 repeat lies at 1244–1281; sequence TNPSHSIPTVIALFASTSQYIRHVAYELLEDLFEKYET.

Belongs to the SCC2/Nipped-B family. In terms of assembly, interacts with SCC4. Interacts with the cohesin complex, which is composed of: the SMC1 and SMC3 heterodimer attached via their hinge domain, MCD1/SCC1 which link them, and IRR1/SCC3, which interacts with MCD1. In terms of processing, phosphorylated at alternative sites Ser-43, Ser-74, Ser-162, Thr-360, Ser-1179 and Ser-1183 when the principal phosphorylation sites Thr-67, Ser-127, Ser-157, Ser-163, Thr-231, Thr-236, Ser-305 and Ser-320 are mutated to alanines.

It is found in the nucleus. Its subcellular location is the chromosome. The protein localises to the centromere. Functionally, plays a structural role in chromatin and is involved in sister chromatid cohesion. Forms a complex with SCC4 required for the stable association of the cohesin complex with chromatin, which may act by hydrolyzing ATP from SMC1 and SMC3 heads. Binds to the nucleosome-free promoter regions of ribosomal protein genes and tRNA genes. Involved in transcriptional regulation by cooperating with the RSC complex to maintain nucleosome exhaustion at its binding sites. The chain is Sister chromatid cohesion protein 2 (SCC2) from Saccharomyces cerevisiae (strain ATCC 204508 / S288c) (Baker's yeast).